Reading from the N-terminus, the 430-residue chain is Histidine--tRNA ligase (430 aa).

It belongs to the class-II aminoacyl-tRNA synthetase family. Homodimer.

Its subcellular location is the cytoplasm. It carries out the reaction tRNA(His) + L-histidine + ATP = L-histidyl-tRNA(His) + AMP + diphosphate + H(+). In Acaryochloris marina (strain MBIC 11017), this protein is Histidine--tRNA ligase.